The following is an 830-amino-acid chain: MANCQIAILYQRFQRVVFGISQLLCFSALISELTNQKEVAAWTYHYSTKAYSWNISRKYCQNRYTDLVAIQNKNEIDYLNKVLPYYSSYYWIGIRKNNKTWTWVGTKKALTNEAENWADNEPNNKRNNEDCVEIYIKSPSAPGKWNDEHCLKKKHALCYTASCQDMSCSKQGECLETIGNYTCSCYPGFYGPECEYVRECGELELPQHVLMNCSHPLGNFSFNSQCSFHCTDGYQVNGPSKLECLASGIWTNKPPQCLAAQCPPLKIPERGNMTCLHSAKAFQHQSSCSFSCEEGFALVGPEVVQCTASGVWTAPAPVCKAVQCQHLEAPSEGTMDCVHPLTAFAYGSSCKFECQPGYRVRGLDMLRCIDSGHWSAPLPTCEAISCEPLESPVHGSMDCSPSLRAFQYDTNCSFRCAEGFMLRGADIVRCDNLGQWTAPAPVCQALQCQDLPVPNEARVNCSHPFGAFRYQSVCSFTCNEGLLLVGASVLQCLATGNWNSVPPECQAIPCTPLLSPQNGTMTCVQPLGSSSYKSTCQFICDEGYSLSGPERLDCTRSGRWTDSPPMCEAIKCPELFAPEQGSLDCSDTRGEFNVGSTCHFSCDNGFKLEGPNNVECTTSGRWSATPPTCKGIASLPTPGVQCPALTTPGQGTMYCRHHPGTFGFNTTCYFGCNAGFTLIGDSTLSCRPSGQWTAVTPACRAVKCSELHVNKPIAMNCSNLWGNFSYGSICSFHCLEGQLLNGSAQTACQENGHWSTTVPTCQAGPLTIQEALTYFGGAVASTIGLIMGGTLLALLRKRFRQKDDGKCPLNPHSHLGTYGVFTNAAFDPSP.

The signal sequence occupies residues 1–41 (MANCQIAILYQRFQRVVFGISQLLCFSALISELTNQKEVAA). Residues 42–771 (WTYHYSTKAY…QAGPLTIQEA (730 aa)) are Extracellular-facing. Asparagine 54 and asparagine 98 each carry an N-linked (GlcNAc...) asparagine glycan. In terms of domain architecture, C-type lectin spans 58–158 (KYCQNRYTDL…HCLKKKHALC (101 aa)). 23 disulfide bridges follow: cysteine 60–cysteine 158, cysteine 131–cysteine 150, cysteine 163–cysteine 174, cysteine 168–cysteine 183, cysteine 185–cysteine 194, cysteine 200–cysteine 244, cysteine 230–cysteine 257, cysteine 262–cysteine 306, cysteine 292–cysteine 319, cysteine 324–cysteine 368, cysteine 354–cysteine 381, cysteine 386–cysteine 430, cysteine 416–cysteine 443, cysteine 448–cysteine 492, cysteine 478–cysteine 505, cysteine 510–cysteine 554, cysteine 540–cysteine 567, cysteine 572–cysteine 616, cysteine 602–cysteine 629, cysteine 642–cysteine 686, cysteine 672–cysteine 699, cysteine 704–cysteine 748, and cysteine 734–cysteine 761. Residues glutamate 121, asparagine 123, and asparagine 124 each contribute to the Ca(2+) site. A carbohydrate is bound at residue asparagine 123. A carbohydrate is bound by residues glutamate 133 and asparagine 146. Ca(2+) contacts are provided by asparagine 146 and aspartate 147. The EGF-like domain maps to 159-195 (YTASCQDMSCSKQGECLETIGNYTCSCYPGFYGPECE). Asparagine 180 is a glycosylation site (N-linked (GlcNAc...) asparagine). Sushi domains lie at 198–259 (RECG…QCLA), 260–321 (AQCP…VCKA), 322–383 (VQCQ…TCEA), 384–445 (ISCE…VCQA), 446–507 (LQCQ…ECQA), 508–569 (IPCT…MCEA), 570–631 (IKCP…TCKG), 640–701 (VQCP…ACRA), and 702–763 (VKCS…TCQA). Residues asparagine 212 and asparagine 219 are each glycosylated (N-linked (GlcNAc...) asparagine). Asparagine 411 is a glycosylation site (N-linked (GlcNAc...) asparagine). The N-linked (GlcNAc...) asparagine glycan is linked to asparagine 460. N-linked (GlcNAc...) asparagine glycosylation occurs at asparagine 518. N-linked (GlcNAc...) asparagine glycosylation is present at asparagine 665. Residues asparagine 716, asparagine 723, and asparagine 741 are each glycosylated (N-linked (GlcNAc...) asparagine). A helical transmembrane segment spans residues 772–795 (LTYFGGAVASTIGLIMGGTLLALL). Residues 796 to 830 (RKRFRQKDDGKCPLNPHSHLGTYGVFTNAAFDPSP) are Cytoplasmic-facing. Cysteine 807 carries S-palmitoyl cysteine; alternate lipidation. Cysteine 807 is lipidated: S-stearoyl cysteine; alternate. The short motif at 818-821 (YGVF) is the Endocytosis signal element. The tract at residues 821–830 (FTNAAFDPSP) is interaction with SNX17.

The protein belongs to the selectin/LECAM family. In terms of assembly, interacts with SNX17. Interacts with SELPLG/PSGL1 and PODXL2 and mediates neutrophil adhesion and leukocyte rolling. This interaction requires the sialyl-Lewis X epitope of SELPLG and PODXL2, and specific tyrosine sulfation on SELPLG. Interacts (via C-type lectin domain) with alpha-IIb/beta3 integrin ITGA2B:ITGB3 and alpha-V/beta-3 integrin ITGAV:ITGB3. Interacts with alpha5/beta1 integrin ITGA5:ITGB1 and alpha4/beta1 integrin ITGA4:ITGB. In terms of tissue distribution, stored in the alpha-granules of platelets and Weibel-Palade bodies of endothelial cells. Upon cell activation by agonists, P-selectin is transported rapidly to the cell surface.

The protein localises to the cell membrane. In terms of biological role, ca(2+)-dependent receptor for myeloid cells that binds to carbohydrates on neutrophils and monocytes. Mediates the interaction of activated endothelial cells or platelets with leukocytes. The ligand recognized is sialyl-Lewis X. Mediates rapid rolling of leukocyte rolling over vascular surfaces during the initial steps in inflammation through interaction with SELPLG. Mediates cell-cell interactions and cell adhesion via the interaction with integrin alpha-IIb/beta3 (ITGA2B:ITGB3) and integrin alpha-V/beta-3 (ITGAV:ITGB3). This chain is P-selectin (SELP), found in Homo sapiens (Human).